The following is a 461-amino-acid chain: Fumarate hydratase class II (461 aa).

Substrate is bound by residues 97–99 (SGT), 127–130 (HPND), 137–139 (SSN), and Thr-185. Residue His-186 is the Proton donor/acceptor of the active site. Ser-316 is an active-site residue. Substrate is bound by residues Ser-317 and 322–324 (KVN).

This sequence belongs to the class-II fumarase/aspartase family. Fumarase subfamily. Homotetramer.

It is found in the cytoplasm. It catalyses the reaction (S)-malate = fumarate + H2O. Its pathway is carbohydrate metabolism; tricarboxylic acid cycle; (S)-malate from fumarate: step 1/1. Involved in the TCA cycle. Catalyzes the stereospecific interconversion of fumarate to L-malate. This chain is Fumarate hydratase class II, found in Oceanobacillus iheyensis (strain DSM 14371 / CIP 107618 / JCM 11309 / KCTC 3954 / HTE831).